The following is a 293-amino-acid chain: Undecaprenyl-diphosphatase (293 aa).

A run of 6 helical transmembrane segments spans residues 74–94, 107–127, 134–154, 209–229, 243–263, and 271–291; these read VLVF…AGVF, WMII…KDLI, MWIT…AEKM, FLLA…DAFA, VGTL…MKFV, and FAAY…LGML.

The protein belongs to the UppP family.

Its subcellular location is the cell membrane. It carries out the reaction di-trans,octa-cis-undecaprenyl diphosphate + H2O = di-trans,octa-cis-undecaprenyl phosphate + phosphate + H(+). Functionally, catalyzes the dephosphorylation of undecaprenyl diphosphate (UPP). Confers resistance to bacitracin. The chain is Undecaprenyl-diphosphatase from Corynebacterium glutamicum (strain ATCC 13032 / DSM 20300 / JCM 1318 / BCRC 11384 / CCUG 27702 / LMG 3730 / NBRC 12168 / NCIMB 10025 / NRRL B-2784 / 534).